A 782-amino-acid polypeptide reads, in one-letter code: Chaoptin (782 aa).

22 LRR repeats span residues 16–37 (SLLTLKLTHALSSSVQNFPSDA), 43–64 (RLEELDLSNNRLRNVPDNSFHF), 67–88 (SLKKVHLQDNTIEMIHRGTFQG), 93–114 (DLTEVYFSFNSVRNVQQHTFAD), 117–138 (QLEQIHLDDNRIESLERRAFMN), 141–162 (SLKRLNLKGNKIATIAYETFQN), 165–186 (ELEDLDLAYNSISSLDFNIFDQ), 191–212 (GMFHVNMSHNKLINLVVAPSVP), 224–245 (NIKVLDLSFNNITSVAKQFFRP), 249–270 (SLMQLYLGHNKLLNATKDLFGN), 273–294 (HLQVLDLSHNSLYELDFDTFRN), 297–318 (KLQWLDTSHNRISEIPNDLFRF), 321–342 (NLRIVDFSHNRLRSLPDNLFRE), 344–364 (GLERLDVSHNLLGKLPLTSLS), 370–391 (TLSELDLSWNSISSLSHGGQLA), 395–416 (CLSWLDLSYNRLGQIDAGTFKG), 419–442 (RLASLNLGHNSQLTLEINGLSFQG), 446–467 (TLLHLNLDNVSLSQVPALSTPN), 468–488 (LLSLSLAFNSLPTVALEVAGN), 491–512 (SLRYLNLDYNDLSAVPIVTHSL), 514–535 (ELRHLSLEGNPITTLSNTSLLG), and 539–560 (QLEELNLKNIDLTVLESGAFCK). Asn-196, Asn-234, and Asn-262 each carry an N-linked (GlcNAc...) asparagine glycan. N-linked (GlcNAc...) asparagine glycosylation is found at Asn-454 and Asn-488. The N-linked (GlcNAc...) asparagine glycan is linked to Asn-530. Asn-618, Asn-648, and Asn-667 each carry an N-linked (GlcNAc...) asparagine glycan.

Belongs to the chaoptin family.

It localises to the cell membrane. Its function is as follows. Required for photoreceptor cell morphogenesis. Mediates homophilic cellular adhesion. This Tribolium castaneum (Red flour beetle) protein is Chaoptin (CHP).